A 442-amino-acid chain; its full sequence is MRTLFLIDGEHYPPVVLDAMRRVREQLGAKGVAAAFLGGTEKIGEGADYGLPLVAAEDPVSAVRQALERYGVEAVVDLSDEPVVGYRERMRIASLALAAGARYVGSDFELRPPEMRRVPGKPSLAVIGTGKRVGKTAVTGYLARLLDREGFRPAVVSMGRGGPPEPEVLEGRRLEVGSDYLLRALERGAHAASDYYETAALSRVTTVGCRRCGGGLAGEPFVSNVLEGARIAAGLDTGITVFDGSGAAIPPVEVDRRVLVAGAHQDPEYVAGYLGAYRLLISDLLVLTMAEEPMAPPGRVEELVRRVREVRPDLPVIPAVFRPRPVGEVRGMRVAYVSTAPPAVLKRLAGHLEEGYGCEVVAVSGNLSNRSKLAEDLEGMPGVDAYLTEIKAAAVDVVTRRGAEEGRRVIYCDNDPVAEGLDGALLRLARAAGRGRSGDRGV.

It belongs to the cyclic 2,3-diphosphoglycerate synthetase family.

Its subcellular location is the cytoplasm. It carries out the reaction (2R)-2,3-bisphosphoglycerate + ATP + H(+) = cyclic (2R)-2,3-bisphosphoglycerate + ADP + phosphate. In terms of biological role, catalyzes the formation of cyclic 2,3-diphosphoglycerate (cDPG) by formation of an intramolecular phosphoanhydride bond at the expense of ATP. The sequence is that of Cyclic 2,3-diphosphoglycerate synthetase from Rubrobacter xylanophilus (strain DSM 9941 / JCM 11954 / NBRC 16129 / PRD-1).